A 122-amino-acid polypeptide reads, in one-letter code: Prefoldin subunit 1 (122 aa).

Ala-2 carries the post-translational modification N-acetylalanine.

This sequence belongs to the prefoldin subunit beta family. Heterohexamer of two PFD-alpha type and four PFD-beta type subunits.

Functionally, binds specifically to cytosolic chaperonin (c-CPN) and transfers target proteins to it. Binds to nascent polypeptide chain and promotes folding in an environment in which there are many competing pathways for nonnative proteins. This is Prefoldin subunit 1 (PFDN1) from Homo sapiens (Human).